We begin with the raw amino-acid sequence, 79 residues long: Small ribosomal subunit protein bS18 (79 aa).

Belongs to the bacterial ribosomal protein bS18 family. As to quaternary structure, part of the 30S ribosomal subunit. Forms a tight heterodimer with protein bS6.

Its function is as follows. Binds as a heterodimer with protein bS6 to the central domain of the 16S rRNA, where it helps stabilize the platform of the 30S subunit. The sequence is that of Small ribosomal subunit protein bS18 from Salinispora arenicola (strain CNS-205).